Consider the following 145-residue polypeptide: Major pollen allergen Ole e 1 (145 aa).

3 disulfides stabilise this stretch: cysteine 19/cysteine 90, cysteine 22/cysteine 131, and cysteine 43/cysteine 78. Residue asparagine 111 is glycosylated (N-linked (GlcNAc...) (complex) asparagine; alternate). N-linked (GlcNAc...) (high mannose) asparagine; alternate glycosylation is present at asparagine 111.

This sequence belongs to the Ole e I family. N-glycosylated; contains high mannose (Man(7)-GlcNAc) and partially fucosylated complex glycans (GlcNAc-Man(3)-Xyl-GlcNAc). Complex glycans may contribute to the antigenicity. Exists both in a glycosylated and in a non-glycosylated form. Ole e 1 and Ole e 1.0103 are the only non-glycosylated isoallergens. Post-translationally, a second potential glycosylation site exists at position 50 in cv. Bella de Espana and cv. Hojiblanca. Expressed in tapetum and pollen grains. Not detected in petals, roots or leaves.

Its subcellular location is the endoplasmic reticulum. It localises to the secreted. May be involved in recognition between pollen-stigma and pollen tube-style cells. In Olea europaea (Common olive), this protein is Major pollen allergen Ole e 1.